Reading from the N-terminus, the 54-residue chain is Small polypeptide DEVIL 12 (54 aa).

A required for DVL/RTFL small polypeptide activity region spans residues N20–E51. N26 carries N-linked (GlcNAc...) asparagine glycosylation. The chain crosses the membrane as a helical span at residues E31–C48.

It belongs to the DVL/RTFL small polypeptides family.

It localises to the cell membrane. Its function is as follows. Small polypeptide acting as a regulatory molecule which coordinates cellular responses required for differentiation, growth and development, probably by restricting polar cell proliferation in lateral organs and coordinating socket cell recruitment and differentiation at trichome sites. The protein is Small polypeptide DEVIL 12 of Arabidopsis thaliana (Mouse-ear cress).